The primary structure comprises 517 residues: Ribonuclease Y (517 aa).

The helical transmembrane segment at 3–23 (AILYVIVAVIALILGGAAGVA) threads the bilayer. Residues 207–292 (TVTVVSLPND…EMVEKAQKEV (86 aa)) enclose the KH domain. One can recognise an HD domain in the interval 333 to 426 (VLKHSIEVAH…VAAADAISAA (94 aa)).

Belongs to the RNase Y family.

The protein resides in the cell membrane. Endoribonuclease that initiates mRNA decay. The polypeptide is Ribonuclease Y (Symbiobacterium thermophilum (strain DSM 24528 / JCM 14929 / IAM 14863 / T)).